The primary structure comprises 162 residues: UPF0178 protein RHOS4_24670 (162 aa).

Belongs to the UPF0178 family.

In Cereibacter sphaeroides (strain ATCC 17023 / DSM 158 / JCM 6121 / CCUG 31486 / LMG 2827 / NBRC 12203 / NCIMB 8253 / ATH 2.4.1.) (Rhodobacter sphaeroides), this protein is UPF0178 protein RHOS4_24670.